Reading from the N-terminus, the 127-residue chain is Large ribosomal subunit protein uL22 (127 aa).

The segment covering Gly-106–Val-117 has biased composition (low complexity). Residues Gly-106–Glu-127 are disordered.

Belongs to the universal ribosomal protein uL22 family. Part of the 50S ribosomal subunit.

Functionally, this protein binds specifically to 23S rRNA; its binding is stimulated by other ribosomal proteins, e.g. L4, L17, and L20. It is important during the early stages of 50S assembly. It makes multiple contacts with different domains of the 23S rRNA in the assembled 50S subunit and ribosome. In terms of biological role, the globular domain of the protein is located near the polypeptide exit tunnel on the outside of the subunit, while an extended beta-hairpin is found that lines the wall of the exit tunnel in the center of the 70S ribosome. This chain is Large ribosomal subunit protein uL22, found in Rubrobacter xylanophilus (strain DSM 9941 / JCM 11954 / NBRC 16129 / PRD-1).